Here is a 382-residue protein sequence, read N- to C-terminus: Anhydro-N-acetylmuramic acid kinase (382 aa).

22–29 is an ATP binding site; the sequence is GTSMDGVD.

The protein belongs to the anhydro-N-acetylmuramic acid kinase family.

The catalysed reaction is 1,6-anhydro-N-acetyl-beta-muramate + ATP + H2O = N-acetyl-D-muramate 6-phosphate + ADP + H(+). Its pathway is amino-sugar metabolism; 1,6-anhydro-N-acetylmuramate degradation. It functions in the pathway cell wall biogenesis; peptidoglycan recycling. Functionally, catalyzes the specific phosphorylation of 1,6-anhydro-N-acetylmuramic acid (anhMurNAc) with the simultaneous cleavage of the 1,6-anhydro ring, generating MurNAc-6-P. Is required for the utilization of anhMurNAc either imported from the medium or derived from its own cell wall murein, and thus plays a role in cell wall recycling. The chain is Anhydro-N-acetylmuramic acid kinase from Burkholderia orbicola (strain AU 1054).